The sequence spans 343 residues: Flap endonuclease 1 (343 aa).

The segment at 1-98 (MGVPIGELIP…KELEKRREAR (98 aa)) is N-domain. Asp-27, Asp-80, Glu-152, Glu-154, Asp-173, Asp-175, and Asp-236 together coordinate Mg(2+). Residues 116 to 258 (EARKYAQRAT…KALEIVKYSK (143 aa)) are I-domain. The interaction with PCNA stretch occupies residues 330–338 (KQSTLESWF).

It belongs to the XPG/RAD2 endonuclease family. FEN1 subfamily. Interacts with PCNA. PCNA stimulates the nuclease activity without altering cleavage specificity. Mg(2+) is required as a cofactor.

Structure-specific nuclease with 5'-flap endonuclease and 5'-3' exonuclease activities involved in DNA replication and repair. During DNA replication, cleaves the 5'-overhanging flap structure that is generated by displacement synthesis when DNA polymerase encounters the 5'-end of a downstream Okazaki fragment. Binds the unpaired 3'-DNA end and kinks the DNA to facilitate 5' cleavage specificity. Cleaves one nucleotide into the double-stranded DNA from the junction in flap DNA, leaving a nick for ligation. Also involved in the base excision repair (BER) pathway. Acts as a genome stabilization factor that prevents flaps from equilibrating into structures that lead to duplications and deletions. Also possesses 5'-3' exonuclease activity on nicked or gapped double-stranded DNA. This is Flap endonuclease 1 from Pyrococcus abyssi (strain GE5 / Orsay).